A 109-amino-acid polypeptide reads, in one-letter code: Putative RNase MJ1380 (109 aa).

Catalysis depends on residues Arg76 and His81. Residues 76–83 (RNILIHKY) carry the RX(4)HXY motif motif. Tyr83 bears the O-di-AMP-tyrosine mark.

It belongs to the HepT RNase toxin family. In terms of assembly, homodimer, probably forms a complex with cognate antitoxin MJ1379. In terms of processing, modified by cognate antitoxin MJ1379; probably at least 2 successive AMPylation events occur on Tyr-83.

Functionally, probable toxic component of a putative type VII toxin-antitoxin (TA) system, probably an RNase. Probably neutralized by cognate antitoxin MJ1379. Neutralization may be due to AMPylation by antitoxin MJ1379. The protein is Putative RNase MJ1380 of Methanocaldococcus jannaschii (strain ATCC 43067 / DSM 2661 / JAL-1 / JCM 10045 / NBRC 100440) (Methanococcus jannaschii).